The chain runs to 199 residues: Superoxide dismutase [Mn/Fe] 2 (199 aa).

Fe(3+) contacts are provided by histidine 27, histidine 81, aspartate 161, and histidine 165. Mn(2+) contacts are provided by histidine 27, histidine 81, aspartate 161, and histidine 165.

The protein belongs to the iron/manganese superoxide dismutase family. Homodimer. Can also form a heterodimer with SodA. Requires Mn(2+) as cofactor. Fe(3+) serves as cofactor.

The enzyme catalyses 2 superoxide + 2 H(+) = H2O2 + O2. Its function is as follows. Destroys superoxide anion radicals which are normally produced within the cells and which are toxic to biological systems. Catalyzes the dismutation of superoxide anion radicals into O2 and H2O2 by successive reduction and oxidation of the transition metal ion at the active site. The polypeptide is Superoxide dismutase [Mn/Fe] 2 (sodM) (Staphylococcus aureus (strain USA300)).